The primary structure comprises 248 residues: Proteasome subunit alpha type-5 (248 aa).

Belongs to the peptidase T1A family. As to quaternary structure, the 26S proteasome consists of a 20S proteasome core and two 19S regulatory subunits. The 20S proteasome core is composed of 28 subunits that are arranged in four stacked rings, resulting in a barrel-shaped structure. The two end rings are each formed by seven alpha subunits, and the two central rings are each formed by seven beta subunits. The catalytic chamber with the active sites is on the inside of the barrel.

The protein resides in the cytoplasm. It localises to the nucleus. Its function is as follows. The proteasome is a multicatalytic proteinase complex which is characterized by its ability to cleave peptides with Arg, Phe, Tyr, Leu, and Glu adjacent to the leaving group at neutral or slightly basic pH. The proteasome has an ATP-dependent proteolytic activity. This Caenorhabditis elegans protein is Proteasome subunit alpha type-5 (pas-5).